A 393-amino-acid chain; its full sequence is Chalcone synthase G (393 aa).

Residue cysteine 164 is part of the active site.

It belongs to the thiolase-like superfamily. Chalcone/stilbene synthases family. In terms of tissue distribution, expressed in seedlings after illumination with UV light. No expression detectable in flowers. It is not known for sure whether CHSG encodes a chalcone synthase or a very closely related condensing enzyme.

It catalyses the reaction (E)-4-coumaroyl-CoA + 3 malonyl-CoA + 3 H(+) = 2',4,4',6'-tetrahydroxychalcone + 3 CO2 + 4 CoA. The protein operates within secondary metabolite biosynthesis; flavonoid biosynthesis. Functionally, the primary product of this enzyme is 4,2',4',6'-tetrahydroxychalcone (also termed naringenin-chalcone or chalcone) which can under specific conditions spontaneously isomerize into naringenin. The protein is Chalcone synthase G (CHSG) of Petunia hybrida (Petunia).